The sequence spans 1254 residues: Structural polyprotein (1254 aa).

Residues 43–77 are host transcription inhibition; sequence LQAQQMQQLISAVSALTTKQNVKAPKGQRKQKQQK. The disordered stretch occupies residues 60–112; that stretch reads TKQNVKAPKGQRKQKQQKPKEKKEKQKKKPTXKKKQQQKPKPQAKKKKPGRRE. The short motif at 70 to 108 is the Nuclear localization signal element; that stretch reads QRKQKQQKPKEKKEKQKKKPTXKKKQQQKPKPQAKKKKP. Positions 84-110 are enriched in basic residues; sequence KQKKKPTXKKKQQQKPKPQAKKKKPGR. The tract at residues 95–123 is binding to the viral RNA; sequence QQQKPKPQAKKKKPGRRERMCMKIENDCI. The ribosome-binding stretch occupies residues 108-122; the sequence is PGRRERMCMKIENDC. An intrachain disulfide couples cysteine 122 to cysteine 137. Residues 122–270 form the Peptidase S3 domain; sequence CIFEVKLDGK…RVTPEGTEEW (149 aa). Histidine 148 functions as the Charge relay system in the catalytic mechanism. The Nuclear export signal motif lies at 153–163; sequence IDNPDLAKLTY. The interval 164 to 169 is interaction with spike glycoprotein E2; the sequence is KKSSKY. Aspartate 170 functions as the Charge relay system in the catalytic mechanism. Residues 192–202 are dimerization of the capsid protein; sequence PEGHYNWHHGA. The active-site Charge relay system is serine 222. The interval 228-232 is dimerization of the capsid protein; the sequence is DNKGR. Over 270–694 the chain is Extracellular; it reads WSAALMMCIL…PHEIIQYYYG (425 aa). The segment at 271 to 282 is functions as an uncleaved signal peptide for the precursor of protein E3/E2; it reads SAALMMCILANT. 3 disulfide bridges follow: cysteine 277–cysteine 286, cysteine 291–cysteine 295, and cysteine 294–cysteine 326. The N-linked (GlcNAc...) asparagine; by host glycan is linked to asparagine 281. Asparagine 328 carries an N-linked (GlcNAc...) asparagine; by host glycan. 6 cysteine pairs are disulfide-bonded: cysteine 353-cysteine 459, cysteine 356-cysteine 362, cysteine 425-cysteine 439, cysteine 487-cysteine 599, cysteine 535-cysteine 559, and cysteine 537-cysteine 554. Interaction with host Mxra8 receptor regions lie at residues 360–363 and 396–398; these read YFCY and HAH. The interval 518-521 is interaction with host Mxra8 receptor; it reads TAGN. N-linked (GlcNAc...) asparagine; by host glycosylation is present at asparagine 534. The interaction with host Mxra8 receptor stretch occupies residues 550-556; it reads TINTCKI. A glycan (N-linked (GlcNAc...) asparagine; by host) is linked at asparagine 596. Residues 695–715 traverse the membrane as a helical segment; it reads LYPAATIAAVSGASLMALLTL. Residues 716–756 lie on the Cytoplasmic side of the membrane; that stretch reads AATCCMLATARRKCLTPYALTPGAVVPLTLGLLXCAPRANA. The S-palmitoyl cysteine; by host moiety is linked to residue cysteine 719. Residues 724 to 728 form an interaction with the capsid protein region; sequence TARRK. Residues cysteine 729 and cysteine 750 are each lipidated (S-palmitoyl cysteine; by host). The transient transmembrane before p62-6K protein processing stretch occupies residues 729-749; sequence CLTPYALTPGAVVPLTLGLLX. A disulfide bridge links cysteine 729 with cysteine 750. The Extracellular segment spans residues 757-771; it reads ASFAETMAYLWDENK. The chain crosses the membrane as a helical span at residues 772–792; sequence TLFWMEXXXXXXALALLACCI. Lysine 793 is a topological domain (cytoplasmic). Residues 794 to 814 traverse the membrane as a helical segment; sequence SLICCCKPFSFLVLLSLGASA. Over 815–1231 the chain is Extracellular; the sequence is KAYEHTATIP…AMTWVQRMAS (417 aa). 4 cysteine pairs are disulfide-bonded: cysteine 865/cysteine 930, cysteine 878/cysteine 910, cysteine 879/cysteine 912, and cysteine 884/cysteine 894. Positions 900–917 are E1 fusion peptide loop; it reads VYPFMWGGAYCFCDSENT. Asparagine 957 carries an N-linked (GlcNAc...) asparagine; by host glycan. 4 disulfide bridges follow: cysteine 1075–cysteine 1087, cysteine 1117–cysteine 1192, cysteine 1122–cysteine 1196, and cysteine 1144–cysteine 1186. The helical transmembrane segment at 1232 to 1252 threads the bilayer; sequence GLGGLALIAVVVLVLVTCITM. The S-palmitoyl cysteine; by host moiety is linked to residue cysteine 1249. Cysteine 1249 carries S-stearoyl cysteine; by host lipidation. The Cytoplasmic segment spans residues 1253 to 1254; it reads RR.

As to quaternary structure, homodimer. Homomultimer. Interacts with host karyopherin KPNA4; this interaction allows the nuclear import of the viral capsid protein. Interacts with spike glycoprotein E2. Interacts with host IRAK1; the interaction leads to inhibition of IRAK1-dependent signaling. In terms of assembly, the precursor of protein E3/E2 and E1 form a heterodimer shortly after synthesis. The precursor of protein E3/E2 and E1 form a heterodimer shortly after synthesis. Processing of the precursor of protein E3/E2 into E2 and E3 results in a heterodimer of the spike glycoproteins E2 and E1. Spike at virion surface are constituted of a trimer of E2-E1 heterodimers. After target cell attachment and endocytosis, E1 change conformation to form homotrimers. Interacts with 6K protein. As to quaternary structure, interacts with spike glycoprotein E1. Processing of the precursor of protein E3/E2 into E2 and E3 results in a heterodimer of the spike glycoproteins E2 and E1. Spike at virion surface are constituted of a trimer of E2-E1 heterodimers. Interacts with 6K protein. Interacts with host MXRA8; this interaction mediates virus entry. Structural polyprotein: Specific enzymatic cleavages in vivo yield mature proteins. Capsid protein is auto-cleaved during polyprotein translation, unmasking a signal peptide at the N-terminus of the precursor of E3/E2. The remaining polyprotein is then targeted to the host endoplasmic reticulum, where host signal peptidase cleaves it into pE2, 6K and E1 proteins. pE2 is further processed to mature E3 and E2 by host furin in trans-Golgi vesicle. In terms of processing, palmitoylated via thioester bonds. These palmitoylations may induce disruption of the C-terminus transmembrane. This would result in the reorientation of E2 C-terminus from lumenal to cytoplasmic side. Post-translationally, N-glycosylated. Palmitoylated via thioester bonds.

Its subcellular location is the virion. The protein localises to the host cytoplasm. It is found in the host cell membrane. It localises to the host nucleus. The protein resides in the virion membrane. Its subcellular location is the host Golgi apparatus. The protein localises to the host trans-Golgi network. It is found in the host endoplasmic reticulum. It carries out the reaction Autocatalytic release of the core protein from the N-terminus of the togavirus structural polyprotein by hydrolysis of a -Trp-|-Ser- bond.. Its function is as follows. Forms an icosahedral capsid with a T=4 symmetry composed of 240 copies of the capsid protein surrounded by a lipid membrane through which penetrate 80 spikes composed of trimers of E1-E2 heterodimers. The capsid protein binds to the viral RNA genome at a site adjacent to a ribosome binding site for viral genome translation following genome release. Possesses a protease activity that results in its autocatalytic cleavage from the nascent structural protein. Following its self-cleavage, the capsid protein transiently associates with ribosomes, and within several minutes the protein binds to viral RNA and rapidly assembles into icosahedric core particles. The resulting nucleocapsid eventually associates with the cytoplasmic domain of the spike glycoprotein E2 at the cell membrane, leading to budding and formation of mature virions. In case of infection, new virions attach to target cells and after clathrin-mediated endocytosis their membrane fuses with the host endosomal membrane. This leads to the release of the nucleocapsid into the cytoplasm, followed by an uncoating event necessary for the genomic RNA to become accessible. The uncoating might be triggered by the interaction of capsid proteins with ribosomes. Binding of ribosomes would release the genomic RNA since the same region is genomic RNA-binding and ribosome-binding. Specifically inhibits interleukin-1 receptor-associated kinase 1/IRAK1-dependent signaling during viral entry, representing a means by which the alphaviruses may evade innate immune detection and activation prior to viral gene expression. In terms of biological role, provides the signal sequence for the translocation of the precursor of protein E3/E2 to the host endoplasmic reticulum. Furin-cleaved E3 remains associated with spike glycoprotein E1 and mediates pH protection of the latter during the transport via the secretory pathway. After virion release from the host cell, the assembly protein E3 is gradually released in the extracellular space. Functionally, plays a role in viral attachment to target host cell, by binding to the cell receptor MXRA8. The host LDLR may also act as a cell receptor for viral entry. Synthesized as a p62 precursor which is processed by furin at the cell membrane just before virion budding, giving rise to E2-E1 heterodimer. The p62-E1 heterodimer is stable, whereas E2-E1 is unstable and dissociate at low pH. p62 is processed at the last step, presumably to avoid E1 fusion activation before its final export to cell surface. E2 C-terminus contains a transitory transmembrane that would be disrupted by palmitoylation, resulting in reorientation of the C-terminal tail from lumenal to cytoplasmic side. This step is critical since E2 C-terminus is involved in budding by interacting with capsid proteins. This release of E2 C-terminus in cytoplasm occurs lately in protein export, and precludes premature assembly of particles at the endoplasmic reticulum membrane. Acts as a viroporin that participates in virus glycoprotein processing and transport to the plasma membrane, cell permeabilization and budding of viral particles. The cation channel is permeable to Na(+)&gt;K(+)&gt;Ca(2+) in vitro. Disrupts the calcium homeostasis of the cell, probably at the endoplasmic reticulum level. This leads to cytoplasmic calcium elevation. Because of its lipophilic properties, the 6K protein is postulated to influence the selection of lipids that interact with the transmembrane domains of the glycoproteins, which, in turn, affects the deformability of the bilayer required for the extreme curvature that occurs as budding proceeds. Present in low amount in virions, about 3% compared to viral glycoproteins. Its function is as follows. Class II viral fusion protein. Fusion activity is inactive as long as E1 is bound to E2 in mature virion. After virus attachment to target cell via host MXRA8 and endocytosis, acidification of the endosome induce dissociation of E1/E2 heterodimer and concomitant trimerization of the E1 subunits. This E1 trimer is fusion active, and promotes release of viral nucleocapsid in cytoplasm after endosome and viral membrane fusion. Efficient fusion requires the presence of cholesterol and sphingolipid in the target membrane. This chain is Structural polyprotein, found in Ross river virus (strain NB5092) (RRV).